Reading from the N-terminus, the 302-residue chain is Protoheme IX farnesyltransferase (302 aa).

The next 9 helical transmembrane spans lie at 24 to 44 (VVSL…FSGY), 48 to 68 (FFSV…AGAL), 97 to 117 (AALV…ELAV), 120 to 140 (LSAV…TVYL), 147 to 167 (NIVV…AAVA), 174 to 194 (SLVL…ALAL), 221 to 241 (ILCY…LRFS), 245 to 265 (YMIV…NVYL), and 282 to 302 (FLLF…GMLI).

This sequence belongs to the UbiA prenyltransferase family. Protoheme IX farnesyltransferase subfamily.

Its subcellular location is the cell inner membrane. The enzyme catalyses heme b + (2E,6E)-farnesyl diphosphate + H2O = Fe(II)-heme o + diphosphate. It functions in the pathway porphyrin-containing compound metabolism; heme O biosynthesis; heme O from protoheme: step 1/1. Converts heme B (protoheme IX) to heme O by substitution of the vinyl group on carbon 2 of heme B porphyrin ring with a hydroxyethyl farnesyl side group. The chain is Protoheme IX farnesyltransferase from Neorickettsia sennetsu (strain ATCC VR-367 / Miyayama) (Ehrlichia sennetsu).